Here is a 272-residue protein sequence, read N- to C-terminus: uncharacterized protein (272 aa).

The segment at 193 to 250 (AFLLPNNSKGVEKSEENEDGVTDNDSSNVNSSTNESPNPTDINVCSNDDATDNTENNL) is disordered. The segment covering 215-233 (DNDSSNVNSSTNESPNPTD) has biased composition (low complexity). The segment covering 235-248 (NVCSNDDATDNTEN) has biased composition (polar residues).

The protein belongs to the pal1 family.

It localises to the cytoplasm. The protein resides in the nucleus. This is an uncharacterized protein from Schizosaccharomyces pombe (strain 972 / ATCC 24843) (Fission yeast).